A 166-amino-acid chain; its full sequence is MNKWRLYYQVLNFGMIVSSALMIWKGLMVITGSESPIVLLSGSMEPAFHRGYLLFLTNRVEDPIRVGEIAVLRIEGRKIPIVHRVLKIHEKQNGHIKFLTKGDNNAVDDRGLYKQDQHWLEKKDVVGRARGFVPYIGIGTSLMNDYPKHKYEVLFLLGLFVLVHRE.

Residues 1–6 are Cytoplasmic-facing; it reads MNKWRL. The chain crosses the membrane as a helical; Signal-anchor for type II membrane protein span at residues 7-24; it reads YYQVLNFGMIVSSALMIW. The Extracellular portion of the chain corresponds to 25–166; that stretch reads KGLMVITGSE…LGLFVLVHRE (142 aa). Ser-43 is an active-site residue.

It belongs to the peptidase S26B family.

It localises to the membrane. The enzyme catalyses Cleavage of hydrophobic, N-terminal signal or leader sequences from secreted and periplasmic proteins.. In terms of biological role, putative component of some signal peptidase complex which removes signal peptides from nascent proteins as they are translocated into the lumen of the endoplasmic reticulum. The sequence is that of Putative signal peptidase complex catalytic subunit SEC11B (SEC11B) from Homo sapiens (Human).